Here is a 482-residue protein sequence, read N- to C-terminus: Bifunctional protein GlmU (482 aa).

The segment at 1–238 is pyrophosphorylase; that stretch reads MSAIRPAAVV…HREIAGINNR (238 aa). UDP-N-acetyl-alpha-D-glucosamine-binding positions include 12-15, Lys-26, Gln-79, and 84-85; these read LAAG and GT. Asp-110 contributes to the Mg(2+) binding site. UDP-N-acetyl-alpha-D-glucosamine contacts are provided by Gly-147, Glu-163, Asn-178, and Asn-236. A Mg(2+)-binding site is contributed by Asn-236. The tract at residues 239-259 is linker; it reads VQLAEARRILNDRLLTRAMLA. The N-acetyltransferase stretch occupies residues 260-482; the sequence is GVTVVDPATT…VASRKPEGED (223 aa). Residues Arg-341 and Lys-359 each coordinate UDP-N-acetyl-alpha-D-glucosamine. Residue His-371 is the Proton acceptor of the active site. Tyr-374 and Asn-385 together coordinate UDP-N-acetyl-alpha-D-glucosamine. Acetyl-CoA-binding positions include Ala-388, 394–395, Ser-413, Ala-431, and Arg-448; that span reads NY.

In the N-terminal section; belongs to the N-acetylglucosamine-1-phosphate uridyltransferase family. This sequence in the C-terminal section; belongs to the transferase hexapeptide repeat family. In terms of assembly, homotrimer. The cofactor is Mg(2+).

The protein localises to the cytoplasm. It catalyses the reaction alpha-D-glucosamine 1-phosphate + acetyl-CoA = N-acetyl-alpha-D-glucosamine 1-phosphate + CoA + H(+). The catalysed reaction is N-acetyl-alpha-D-glucosamine 1-phosphate + UTP + H(+) = UDP-N-acetyl-alpha-D-glucosamine + diphosphate. It participates in nucleotide-sugar biosynthesis; UDP-N-acetyl-alpha-D-glucosamine biosynthesis; N-acetyl-alpha-D-glucosamine 1-phosphate from alpha-D-glucosamine 6-phosphate (route II): step 2/2. The protein operates within nucleotide-sugar biosynthesis; UDP-N-acetyl-alpha-D-glucosamine biosynthesis; UDP-N-acetyl-alpha-D-glucosamine from N-acetyl-alpha-D-glucosamine 1-phosphate: step 1/1. It functions in the pathway bacterial outer membrane biogenesis; LPS lipid A biosynthesis. In terms of biological role, catalyzes the last two sequential reactions in the de novo biosynthetic pathway for UDP-N-acetylglucosamine (UDP-GlcNAc). The C-terminal domain catalyzes the transfer of acetyl group from acetyl coenzyme A to glucosamine-1-phosphate (GlcN-1-P) to produce N-acetylglucosamine-1-phosphate (GlcNAc-1-P), which is converted into UDP-GlcNAc by the transfer of uridine 5-monophosphate (from uridine 5-triphosphate), a reaction catalyzed by the N-terminal domain. The chain is Bifunctional protein GlmU from Streptomyces avermitilis (strain ATCC 31267 / DSM 46492 / JCM 5070 / NBRC 14893 / NCIMB 12804 / NRRL 8165 / MA-4680).